The sequence spans 95 residues: Small ribosomal subunit protein bS18 (95 aa).

This sequence belongs to the bacterial ribosomal protein bS18 family. Part of the 30S ribosomal subunit. Forms a tight heterodimer with protein bS6.

Functionally, binds as a heterodimer with protein bS6 to the central domain of the 16S rRNA, where it helps stabilize the platform of the 30S subunit. The chain is Small ribosomal subunit protein bS18 from Rickettsia canadensis (strain McKiel).